Here is an 80-residue protein sequence, read N- to C-terminus: Large ribosomal subunit protein eL38 (80 aa).

It belongs to the eukaryotic ribosomal protein eL38 family. As to quaternary structure, component of the large ribosomal subunit (LSU). Mature N.crassa ribosomes consist of a small (40S) and a large (60S) subunit. The 40S small subunit contains 1 molecule of ribosomal RNA (18S rRNA) and at least 32 different proteins. The large 60S subunit contains 3 rRNA molecules (26S, 5.8S and 5S rRNA) and at least 42 different proteins.

It is found in the cytoplasm. Functionally, component of the ribosome, a large ribonucleoprotein complex responsible for the synthesis of proteins in the cell. The small ribosomal subunit (SSU) binds messenger RNAs (mRNAs) and translates the encoded message by selecting cognate aminoacyl-transfer RNA (tRNA) molecules. The large subunit (LSU) contains the ribosomal catalytic site termed the peptidyl transferase center (PTC), which catalyzes the formation of peptide bonds, thereby polymerizing the amino acids delivered by tRNAs into a polypeptide chain. The nascent polypeptides leave the ribosome through a tunnel in the LSU and interact with protein factors that function in enzymatic processing, targeting, and the membrane insertion of nascent chains at the exit of the ribosomal tunnel. The polypeptide is Large ribosomal subunit protein eL38 (rpl-38) (Neurospora crassa (strain ATCC 24698 / 74-OR23-1A / CBS 708.71 / DSM 1257 / FGSC 987)).